Here is a 92-residue protein sequence, read N- to C-terminus: MGRECEITGKRTMFGNNVPRKGLAKKKGGAGQHIGVKTKRTFKVNLINKKFFIPELGKSVNIKISASALRSISKVGLSVFLKKNCKKIEDFI.

It belongs to the bacterial ribosomal protein bL28 family.

The sequence is that of Large ribosomal subunit protein bL28 from Borrelia hermsii (strain HS1 / DAH).